The following is a 1097-amino-acid chain: Transmembrane protein 132D (1097 aa).

Positions 1–30 are cleaved as a signal peptide; it reads MCPSEMGTLWYLWSPVLISLAALFSKVTEG. Residues 31 to 913 are Extracellular-facing; the sequence is RGILESIQRF…LDQAAKGLSD (883 aa). Positions 233–245 are enriched in basic and acidic residues; the sequence is DERGDCAKEDSRK. Residues 233-263 are disordered; the sequence is DERGDCAKEDSRKSGGTPAGHNDVDESSPPL. A helical transmembrane segment spans residues 914 to 934; the sequence is LEIGMYALLGVFCLAILVFLI. At 935–1097 the chain is on the cytoplasmic side; sequence NCVTFALKYR…SCMERLHEHV (163 aa). The disordered stretch occupies residues 1021-1042; it reads MLTDDQEQKSEPPTSPTSKRKR.

This sequence belongs to the TMEM132 family. As to expression, expressed in mature oligodendrocytes in the white and gray matter of the brain.

The protein resides in the membrane. Functionally, regulates neuronal morphology via inhibition of the WAVE regulatory complex (WCR), a complex that controls F-actin cytoskeletal dynamics. The protein is Transmembrane protein 132D (Tmem132d) of Mus musculus (Mouse).